Consider the following 339-residue polypeptide: DNA-directed RNA polymerase RPB7 homolog (339 aa).

This sequence belongs to the Asfivirus DNA-directed RNA polymerase RPB7 homolog family. Part of the viral DNA-directed RNA polymerase that consists of 8 polII-like subunits (RPB1, RPB2, RPB3, RPB5, RPB6, RPB7, RPB9, RPB10), a capping enzyme and a termination factor.

It is found in the host cytoplasm. The protein localises to the virion. Its function is as follows. Component of the DNA-directed RNA polymerase (RNAP) that catalyzes the transcription in the cytoplasm of viral DNA into RNA using the four ribonucleoside triphosphates as substrates. This African swine fever virus (strain Badajoz 1971 Vero-adapted) (Ba71V) protein is DNA-directed RNA polymerase RPB7 homolog.